A 310-amino-acid chain; its full sequence is HPr kinase/phosphorylase (310 aa).

Catalysis depends on residues histidine 136 and lysine 157. 151–158 is a binding site for ATP; sequence GDSGIGKS. Serine 158 is a Mg(2+) binding site. Aspartate 175 (proton acceptor; for phosphorylation activity. Proton donor; for dephosphorylation activity) is an active-site residue. Positions 199–208 are important for the catalytic mechanism of both phosphorylation and dephosphorylation; that stretch reads LEIRGLGIIN. Residue glutamate 200 participates in Mg(2+) binding. Arginine 241 is an active-site residue. The important for the catalytic mechanism of dephosphorylation stretch occupies residues 262 to 267; that stretch reads PVRPGR.

This sequence belongs to the HPrK/P family. As to quaternary structure, homohexamer. The cofactor is Mg(2+).

The enzyme catalyses [HPr protein]-L-serine + ATP = [HPr protein]-O-phospho-L-serine + ADP + H(+). It catalyses the reaction [HPr protein]-O-phospho-L-serine + phosphate + H(+) = [HPr protein]-L-serine + diphosphate. Its function is as follows. Catalyzes the ATP- as well as the pyrophosphate-dependent phosphorylation of a specific serine residue in HPr, a phosphocarrier protein of the phosphoenolpyruvate-dependent sugar phosphotransferase system (PTS). HprK/P also catalyzes the pyrophosphate-producing, inorganic phosphate-dependent dephosphorylation (phosphorolysis) of seryl-phosphorylated HPr (P-Ser-HPr). The two antagonistic activities of HprK/P are regulated by several intracellular metabolites, which change their concentration in response to the absence or presence of rapidly metabolisable carbon sources (glucose, fructose, etc.) in the growth medium. Therefore, by controlling the phosphorylation state of HPr, HPrK/P is a sensor enzyme that plays a major role in the regulation of carbon metabolism and sugar transport: it mediates carbon catabolite repression (CCR), and regulates PTS-catalyzed carbohydrate uptake and inducer exclusion. The chain is HPr kinase/phosphorylase from Staphylococcus aureus (strain Mu3 / ATCC 700698).